Reading from the N-terminus, the 560-residue chain is Alpha-farnesene synthase (560 aa).

Residues D308, D312, and E462 each contribute to the Mg(2+) site. The short motif at 308–312 (DDIYD) is the DDXXD motif element.

It belongs to the terpene synthase family. Tpsa subfamily. The cofactor is Mg(2+). In terms of tissue distribution, expressed in the rind tissues of ripe fruits.

It localises to the cytoplasm. It catalyses the reaction (2E,6E)-farnesyl diphosphate = (3E,6E)-alpha-farnesene + diphosphate. It functions in the pathway secondary metabolite biosynthesis; terpenoid biosynthesis. In terms of biological role, sesquiterpene synthase producing exclusively alpha-farnesene. Associated with the production of sesquiterpenes responsible for the aroma of the fruit. In Cucumis melo (Muskmelon), this protein is Alpha-farnesene synthase.